A 904-amino-acid polypeptide reads, in one-letter code: Protein argonaute 4A (904 aa).

Disordered stretches follow at residues 1 to 33 (MESNSGEIEELPPPPPLPPNAEPIKTDDTKKLS) and 143 to 166 (KSSANGGSPGNDSPGNDRKRVRRP). Positions 11 to 21 (LPPPPPLPPNA) are enriched in pro residues. Positions 144–156 (SSANGGSPGNDSP) are enriched in low complexity. In terms of domain architecture, PAZ spans 274–388 (PVVDFLLANQ…FPIELCSLVP (115 aa)). Residues 557–865 (FLLCVLAERK…AAAQVSQFIK (309 aa)) form the Piwi domain. Residues 871-890 (ETSSSHGGHTSAGSAPVPEL) form a disordered region. The span at 872 to 885 (TSSSHGGHTSAGSA) shows a compositional bias: low complexity.

Belongs to the argonaute family. Ago subfamily.

Functionally, probably involved in the RNA silencing pathway. May bind to short RNAs such as microRNAs (miRNAs) or short interfering RNAs (siRNAs), and represses the translation of mRNAs which are complementary to them. The protein is Protein argonaute 4A (AGO4A) of Oryza sativa subsp. japonica (Rice).